Here is a 267-residue protein sequence, read N- to C-terminus: Oxidoreductase ordB (267 aa).

This sequence belongs to the avfA family.

It participates in mycotoxin biosynthesis. Oxidoreductase; part of the fragmented gene cluster that mediates the biosynthesis of dothistromin (DOTH), a polyketide toxin very similar in structure to the aflatoxin precursor, versicolorin B. The first step of the pathway is the conversion of acetate to norsolorinic acid (NOR) and requires the fatty acid synthase subunits hexA and hexB, as well as the polyketide synthase pksA. PksA combines a hexanoyl starter unit and 7 malonyl-CoA extender units to synthesize the precursor NOR. The hexanoyl starter unit is provided to the acyl-carrier protein (ACP) domain by the fungal fatty acid synthase hexA/hexB. The second step is the conversion of NOR to averantin (AVN) and requires the norsolorinic acid ketoreductase nor1, which catalyzes the dehydration of norsolorinic acid to form (1'S)-averantin. The cytochrome P450 monooxygenase avnA then catalyzes the hydroxylation of AVN to 5'hydroxyaverantin (HAVN). The next step is performed by adhA that transforms HAVN to averufin (AVF). Averufin might then be converted to hydroxyversicolorone by cypX and avfA. Hydroxyversicolorone is further converted versiconal hemiacetal acetate (VHA) by moxY. VHA is then the substrate for the versiconal hemiacetal acetate esterase est1 to yield versiconal (VAL). Versicolorin B synthase vbsA then converts VAL to versicolorin B (VERB) by closing the bisfuran ring. Then, the activity of the versicolorin B desaturase verB leads to versicolorin A (VERA). DotB, a predicted chloroperoxidase, may perform epoxidation of the A-ring of VERA. Alternatively, a cytochrome P450, such as cypX or avnA could catalyze this step. It is also possible that another, uncharacterized, cytochrome P450 enzyme is responsible for this step. Opening of the epoxide could potentially be achieved by the epoxide hydrolase epoA. However, epoA seems not to be required for DOTH biosynthesis, but other epoxide hydrolases may have the ability to complement this hydrolysis. Alternatively, opening of the epoxide ring could be achieved non-enzymatically. The next step is the deoxygenation of ring A to yield the 5,8-dihydroxyanthraquinone which is most likely catalyzed by the NADPH dehydrogenase encoded by ver1. The last stages of DOTH biosynthesis are proposed to involve hydroxylation of the bisfuran. OrdB and norB might have oxidative roles here. An alternative possibility is that cytochrome P450 monoogenases such as avnA and cypX might perform these steps in addition to previously proposed steps. The sequence is that of Oxidoreductase ordB from Dothistroma septosporum (strain NZE10 / CBS 128990) (Red band needle blight fungus).